The following is a 279-amino-acid chain: Large ribosomal subunit protein uL2 (279 aa).

A disordered region spans residues 223 to 279 (VAMNPIDHPHGGGEGRTSGGRHPVTPWGKGTKGTRTRSNKSTDKYILRSRHAKKKGR). Positions 269 to 279 (LRSRHAKKKGR) are enriched in basic residues.

It belongs to the universal ribosomal protein uL2 family. In terms of assembly, part of the 50S ribosomal subunit. Forms a bridge to the 30S subunit in the 70S ribosome.

One of the primary rRNA binding proteins. Required for association of the 30S and 50S subunits to form the 70S ribosome, for tRNA binding and peptide bond formation. It has been suggested to have peptidyltransferase activity; this is somewhat controversial. Makes several contacts with the 16S rRNA in the 70S ribosome. This chain is Large ribosomal subunit protein uL2, found in Paracoccus denitrificans (strain Pd 1222).